The sequence spans 281 residues: MNSFKIKSYAKINLALNVTGKKSKLHNIESLISFIDLHDSITITESNTKQHKINFIGRFSKNISKINTISKLLKILDNKKLLNNKKFEIKVIKHIPQKAGMGGGSMNAASLLNFFIEKKLIKIKKNDSKKISNEIGSDVILGIKPSLAILLSNGDIKKFKNKIKFHILVAKPNFGCSTKYIYSKVDSFSKPQFNPPKQKLFEAKYLKNLDNDLEKVALNKYPELKRIKSYLNGLPNTLFVRMSGSGSSIVAYFHSKKACKKACSQYKRKFNNHWCIESKTI.

Active-site residues include Lys-11 and Asp-138.

The protein belongs to the GHMP kinase family. IspE subfamily.

The enzyme catalyses 4-CDP-2-C-methyl-D-erythritol + ATP = 4-CDP-2-C-methyl-D-erythritol 2-phosphate + ADP + H(+). It functions in the pathway isoprenoid biosynthesis; isopentenyl diphosphate biosynthesis via DXP pathway; isopentenyl diphosphate from 1-deoxy-D-xylulose 5-phosphate: step 3/6. Catalyzes the phosphorylation of the position 2 hydroxy group of 4-diphosphocytidyl-2C-methyl-D-erythritol. This is 4-diphosphocytidyl-2-C-methyl-D-erythritol kinase from Pelagibacter ubique (strain HTCC1062).